The chain runs to 197 residues: MKNNYTSLKSSVDEEDELKTGHEIDLEKGPLPEHNSEGESTLPPYSDISKLANLVPEDSSTGPTETANPNVERRQEFKDLHPNIYSLLRLLIAVLAVSVVFFTAWGCVNPLEKSTFGKIAFFVLIGLTCLILLITMILEPGLIGISIMKRLIGDNGNDERDYFVENRLLSSPDCDARQHANSDTAIPLREMNPESEA.

Residues methionine 1–serine 10 are compositionally biased toward polar residues. 2 disordered regions span residues methionine 1 to serine 46 and leucine 54 to arginine 73. A compositionally biased stretch (basic and acidic residues) spans leucine 18–glutamate 37. Positions aspartate 58–proline 69 are enriched in polar residues. The next 2 membrane-spanning stretches (helical) occupy residues asparagine 83–tryptophan 105 and alanine 120–leucine 142.

Belongs to the WTF family.

Its subcellular location is the endoplasmic reticulum membrane. This is an uncharacterized protein from Schizosaccharomyces pombe (strain 972 / ATCC 24843) (Fission yeast).